Here is a 172-residue protein sequence, read N- to C-terminus: MDLQEKIRVIENFPKEGISFKDITTLIADGEALRETINRIVKHLEDKKIDLIVGPEARGFIFGVPVAYALGVGFIPVRKPGKLPGETISVNYGLEYGEDQLQLHKDAIKPGQRVAVVDDLLATGGTVEGVAKLIEQAGGIVASLDFVIELTELKGKDKLEGYDVLSLVKYDI.

It belongs to the purine/pyrimidine phosphoribosyltransferase family. In terms of assembly, homodimer.

Its subcellular location is the cytoplasm. It catalyses the reaction AMP + diphosphate = 5-phospho-alpha-D-ribose 1-diphosphate + adenine. The protein operates within purine metabolism; AMP biosynthesis via salvage pathway; AMP from adenine: step 1/1. Functionally, catalyzes a salvage reaction resulting in the formation of AMP, that is energically less costly than de novo synthesis. The chain is Adenine phosphoribosyltransferase from Clostridium beijerinckii (strain ATCC 51743 / NCIMB 8052) (Clostridium acetobutylicum).